A 301-amino-acid chain; its full sequence is Phosphatidylglycerol--prolipoprotein diacylglyceryl transferase (301 aa).

Helical transmembrane passes span 10–30 (IAFS…LAGF), 57–77 (LLFY…MLFY), 92–112 (VWEG…AVAW), and 119–139 (MHMF…LGFG). Arg-140 is a binding site for a 1,2-diacyl-sn-glycero-3-phospho-(1'-sn-glycerol). The next 3 membrane-spanning stretches (helical) occupy residues 202 to 222 (PSQL…LWLF), 230 to 250 (YAVS…VEFV), and 264 to 284 (LTRG…LFWL).

This sequence belongs to the Lgt family.

The protein resides in the cell inner membrane. It catalyses the reaction L-cysteinyl-[prolipoprotein] + a 1,2-diacyl-sn-glycero-3-phospho-(1'-sn-glycerol) = an S-1,2-diacyl-sn-glyceryl-L-cysteinyl-[prolipoprotein] + sn-glycerol 1-phosphate + H(+). It functions in the pathway protein modification; lipoprotein biosynthesis (diacylglyceryl transfer). In terms of biological role, catalyzes the transfer of the diacylglyceryl group from phosphatidylglycerol to the sulfhydryl group of the N-terminal cysteine of a prolipoprotein, the first step in the formation of mature lipoproteins. The chain is Phosphatidylglycerol--prolipoprotein diacylglyceryl transferase from Xylella fastidiosa (strain M12).